The sequence spans 388 residues: 3-oxo-tetronate kinase (388 aa).

Residues Ser-258 and 360 to 363 (GGET) each bind ATP.

This sequence belongs to the four-carbon acid sugar kinase family.

It catalyses the reaction 3-dehydro-L-erythronate + ATP = 3-dehydro-4-O-phospho-L-erythronate + ADP + H(+). The enzyme catalyses 3-dehydro-D-erythronate + ATP = 3-dehydro-4-O-phospho-D-erythronate + ADP + H(+). In terms of biological role, catalyzes the ATP-dependent phosphorylation of 3-oxo-tetronate to 3-oxo-tetronate 4-phosphate. This Escherichia coli (strain K12) protein is 3-oxo-tetronate kinase.